Reading from the N-terminus, the 300-residue chain is Enoyl-CoA hydratase domain-containing protein 3, mitochondrial (300 aa).

The transit peptide at Met1–Arg66 directs the protein to the mitochondrion. Residues Ser32–Asp54 form a disordered region. Lys110 is subject to N6-succinyllysine.

Belongs to the enoyl-CoA hydratase/isomerase family.

It localises to the mitochondrion. Its function is as follows. May play a role in fatty acid biosynthesis and insulin sensitivity. This is Enoyl-CoA hydratase domain-containing protein 3, mitochondrial from Rattus norvegicus (Rat).